Here is a 242-residue protein sequence, read N- to C-terminus: MRKKIIIGNWKMNKTKTEAENFVKEFNKITSELNLKLDKNLVAGLALPFTSLGIKKEGNFANLVIAAQNFHQNNSGAFTGEISAEMLLDLGVKMVVLGHSERREFFHETDEIVNMKMHQAIKNNLVPIVCVGETELQYNSNKSKEVIKNQIEKSLKNLSDFSKIIIAYEPIWAIGTGKTATVEYAQEMCKYIRSLTNEKTIIQYGGSVKPNNIKELLSQKDIDGALVGGASLNVKDFIDLIK.

N9 to K11 contributes to the substrate binding site. Catalysis depends on H99, which acts as the Electrophile. The Proton acceptor role is filled by E169. Substrate contacts are provided by residues G175, S207, and G228–G229.

This sequence belongs to the triosephosphate isomerase family. Homodimer.

Its subcellular location is the cytoplasm. It catalyses the reaction D-glyceraldehyde 3-phosphate = dihydroxyacetone phosphate. Its pathway is carbohydrate biosynthesis; gluconeogenesis. It participates in carbohydrate degradation; glycolysis; D-glyceraldehyde 3-phosphate from glycerone phosphate: step 1/1. Functionally, involved in the gluconeogenesis. Catalyzes stereospecifically the conversion of dihydroxyacetone phosphate (DHAP) to D-glyceraldehyde-3-phosphate (G3P). This chain is Triosephosphate isomerase, found in Mycoplasma mobile (strain ATCC 43663 / 163K / NCTC 11711) (Mesomycoplasma mobile).